We begin with the raw amino-acid sequence, 574 residues long: 5'-nucleotidase (574 aa).

The signal sequence occupies residues 1–26 (MNPGAARTPALRILALGALLWPAARP). Aspartate 36 and histidine 38 together coordinate Zn(2+). A disulfide bridge links cysteine 51 with cysteine 57. An N-linked (GlcNAc...) asparagine glycan is attached at asparagine 53. Zn(2+)-binding residues include aspartate 85, asparagine 117, histidine 220, and histidine 243. 2 N-linked (GlcNAc...) asparagine glycosylation sites follow: asparagine 311 and asparagine 333. Disulfide bonds link cysteine 353–cysteine 358 and cysteine 365–cysteine 387. An AMP-binding site is contributed by arginine 354. Arginine 354 provides a ligand contact to IMP. Positions 390 and 395 each coordinate AMP. IMP contacts are provided by asparagine 390 and arginine 395. An N-linked (GlcNAc...) asparagine glycan is attached at asparagine 403. Phenylalanine 417 serves as a coordination point for AMP. Phenylalanine 417 is an IMP binding site. Cysteine 476 and cysteine 479 form a disulfide bridge. Phenylalanine 500 and aspartate 506 together coordinate AMP. The IMP site is built by phenylalanine 500 and aspartate 506. A lipid anchor (GPI-anchor amidated serine) is attached at serine 549. The propeptide at 550 to 574 (AGSHCCGSFSLIFLSVLAVIIILYQ) is removed in mature form.

The protein belongs to the 5'-nucleotidase family. As to quaternary structure, homodimer. Requires Zn(2+) as cofactor.

It is found in the cell membrane. It catalyses the reaction a ribonucleoside 5'-phosphate + H2O = a ribonucleoside + phosphate. The catalysed reaction is a 2'-deoxyribonucleoside 5'-phosphate + H2O = a 2'-deoxyribonucleoside + phosphate. It carries out the reaction dTMP + H2O = thymidine + phosphate. The enzyme catalyses CMP + H2O = cytidine + phosphate. It catalyses the reaction IMP + H2O = inosine + phosphate. The catalysed reaction is AMP + H2O = adenosine + phosphate. It carries out the reaction GMP + H2O = guanosine + phosphate. The enzyme catalyses UMP + H2O = uridine + phosphate. It catalyses the reaction dAMP + H2O = 2'-deoxyadenosine + phosphate. The catalysed reaction is dCMP + H2O = 2'-deoxycytidine + phosphate. Functionally, catalyzes the hydrolysis of nucleotide monophosphates, releasing inorganic phosphate and the corresponding nucleoside, with AMP being the preferred substrate. Shows a preference for ribonucleotide monophosphates over their equivalent deoxyribose forms. Other substrates include IMP, UMP, GMP, CMP, dAMP, dCMP, dTMP, NAD and NMN. The protein is 5'-nucleotidase (NT5E) of Bos taurus (Bovine).